The sequence spans 507 residues: 3-[(3aS,4S,7aS)-7a-methyl-1,5-dioxo-octahydro-1H-inden-4-yl]propanoyl:CoA ligase (507 aa).

ATP is bound by residues 177–185, Asp-391, Arg-406, and Lys-497; that span reads TSGTTGRSK.

This sequence belongs to the ATP-dependent AMP-binding enzyme family.

The enzyme catalyses 3-[(3aS,4S,7aS)-7a-methyl-1,5-dioxo-octahydro-1H-inden-4-yl]propanoate + ATP + CoA = 3-[(3aS,4S,7aS)-7a-methyl-1,5-dioxo-octahydro-1H-inden-4-yl]propanoyl-CoA + AMP + diphosphate. The catalysed reaction is 5-hydroxy-3-[(3aS,4S,5R,7aS)-7a-methyl-1,5-dioxo-octahydro-1H-inden-4-yl]propanoate + ATP + CoA = 3-[(3aS,4S,5R,7aS)-5-hydroxy-7a-methyl-1-oxo-octahydro-1H-inden-4-yl]propanoyl-CoA + AMP + diphosphate. In terms of biological role, involved in the catabolism of the rings C and D of cholesterol. Catalyzes the ATP-dependent CoA thioesterification of 3aalpha-H-4alpha(3'-propanoate)-7abeta-methylhexahydro-1,5-indanedione (HIP) to yield HIP-CoA. It can also use the hydroxylated analogs of HIP, 5alpha-OH HIP and 1beta-OH HIP. It requires that the side chain at C17 is completely removed. In Mycobacterium tuberculosis (strain ATCC 25618 / H37Rv), this protein is 3-[(3aS,4S,7aS)-7a-methyl-1,5-dioxo-octahydro-1H-inden-4-yl]propanoyl:CoA ligase.